The following is a 137-amino-acid chain: Putative pre-16S rRNA nuclease (137 aa).

This sequence belongs to the YqgF nuclease family.

It is found in the cytoplasm. Its function is as follows. Could be a nuclease involved in processing of the 5'-end of pre-16S rRNA. This is Putative pre-16S rRNA nuclease from Actinobacillus pleuropneumoniae serotype 7 (strain AP76).